The sequence spans 549 residues: Glucose-6-phosphate isomerase (549 aa).

E355 serves as the catalytic Proton donor. Active-site residues include H386 and K514.

It belongs to the GPI family.

Its subcellular location is the cytoplasm. The enzyme catalyses alpha-D-glucose 6-phosphate = beta-D-fructose 6-phosphate. It functions in the pathway carbohydrate biosynthesis; gluconeogenesis. Its pathway is carbohydrate degradation; glycolysis; D-glyceraldehyde 3-phosphate and glycerone phosphate from D-glucose: step 2/4. Catalyzes the reversible isomerization of glucose-6-phosphate to fructose-6-phosphate. The chain is Glucose-6-phosphate isomerase from Salmonella paratyphi C (strain RKS4594).